The chain runs to 102 residues: MKYLLIFLLVLAIFVISVTLGAQNDQQVTFNYLLAQGEYRISTLLAVLFAAGFAIGWLICGLFWLRVRVSLARAERKIKRLENQLSPATDVAVVPHSSAAKE.

Residues 1–2 (MK) lie on the Cytoplasmic side of the membrane. A helical membrane pass occupies residues 3–23 (YLLIFLLVLAIFVISVTLGAQ). Residues 24 to 43 (NDQQVTFNYLLAQGEYRIST) are Periplasmic-facing. The chain crosses the membrane as a helical span at residues 44–64 (LLAVLFAAGFAIGWLICGLFW). Residues 64–92 (WLRVRVSLARAERKIKRLENQLSPATDVA) adopt a coiled-coil conformation. Residues 65 to 102 (LRVRVSLARAERKIKRLENQLSPATDVAVVPHSSAAKE) lie on the Cytoplasmic side of the membrane.

Belongs to the LapA family.

The protein localises to the cell inner membrane. Its function is as follows. Involved in the assembly of lipopolysaccharide (LPS). This chain is Lipopolysaccharide assembly protein A, found in Escherichia coli (strain K12).